A 202-amino-acid polypeptide reads, in one-letter code: Imidazoleglycerol-phosphate dehydratase (202 aa).

The protein belongs to the imidazoleglycerol-phosphate dehydratase family.

The protein resides in the cytoplasm. The enzyme catalyses D-erythro-1-(imidazol-4-yl)glycerol 3-phosphate = 3-(imidazol-4-yl)-2-oxopropyl phosphate + H2O. Its pathway is amino-acid biosynthesis; L-histidine biosynthesis; L-histidine from 5-phospho-alpha-D-ribose 1-diphosphate: step 6/9. The chain is Imidazoleglycerol-phosphate dehydratase from Brucella anthropi (strain ATCC 49188 / DSM 6882 / CCUG 24695 / JCM 21032 / LMG 3331 / NBRC 15819 / NCTC 12168 / Alc 37) (Ochrobactrum anthropi).